We begin with the raw amino-acid sequence, 178 residues long: Extracellular fatty acid-binding protein (178 aa).

An N-terminal signal peptide occupies residues 1–20 (MRTLALSLALALLCLLHTEA). Ala21 carries the post-translational modification Blocked amino end (Ala). Thr43 is an enterobactin binding site. 1-tetradecanoyl-sn-glycerol 3-phosphate-binding residues include Tyr72 and Lys104. Cysteines 80 and 173 form a disulfide. Enterobactin-binding residues include Lys104, Arg123, and Arg134. 134-136 (RLY) provides a ligand contact to 1-tetradecanoyl-sn-glycerol 3-phosphate.

Belongs to the calycin superfamily. Lipocalin family. Monomer. In terms of processing, does not seem to be glycosylated. As to expression, expressed in egg white (at protein level). Expressed in the magnum of the oviduct (at protein level). Preferentially synthesized in nonproliferating cells.

The protein localises to the secreted. In terms of biological role, siderocalin-like lipocalin tightly binding a variety of bacterial ferric siderophores, also binds long-chain unsaturated fatty acids such as linoleic acid, oleic acid, arachidonic acid and, with a lower affinity, long chain saturated fatty acids such as steraic acid. May act as an antibacterial factor, through dual ligand specificity, both as a siderophore-sequestrating molecule and a lysophosphatidic acid (LPA) sensor. The polypeptide is Extracellular fatty acid-binding protein (EXFABP) (Gallus gallus (Chicken)).